The primary structure comprises 212 residues: NAD(P)H dehydrogenase (quinone) 3 (212 aa).

The Flavodoxin-like domain occupies M4–V192. FMN-binding positions include S10–I15 and T78–F80. Y12 is an NAD(+) binding site. Substrate is bound at residue W98. Residues S113–G119 and H134 contribute to the FMN site. Residues Y161–L182 are disordered.

It belongs to the WrbA family. FMN is required as a cofactor.

It catalyses the reaction a quinone + NADH + H(+) = a quinol + NAD(+). The catalysed reaction is a quinone + NADPH + H(+) = a quinol + NADP(+). This is NAD(P)H dehydrogenase (quinone) 3 from Rhizobium meliloti (strain 1021) (Ensifer meliloti).